Here is a 693-residue protein sequence, read N- to C-terminus: Glycine--tRNA ligase beta subunit (693 aa).

Residues 65–74 are compositionally biased toward basic and acidic residues; sequence QPDKSVEKRG. Residues 65-84 form a disordered region; that stretch reads QPDKSVEKRGPAVKAAFDDS.

Belongs to the class-II aminoacyl-tRNA synthetase family. Tetramer of two alpha and two beta subunits.

The protein resides in the cytoplasm. It carries out the reaction tRNA(Gly) + glycine + ATP = glycyl-tRNA(Gly) + AMP + diphosphate. The polypeptide is Glycine--tRNA ligase beta subunit (Marinobacter nauticus (strain ATCC 700491 / DSM 11845 / VT8) (Marinobacter aquaeolei)).